The sequence spans 125 residues: Fluoride-specific ion channel FluC (125 aa).

4 helical membrane-spanning segments follow: residues 5–25, 29–49, 66–86, and 95–115; these read LLVALGGALGSLLRYGLGALV, LGAGFPWSTLFVNALGSFLIG, LFLAVGVLGGFTTFSSLSYET, and VGKALLYAFGSLFLGLFLAFL. Na(+)-binding residues include Gly-74 and Thr-77.

This sequence belongs to the fluoride channel Fluc/FEX (TC 1.A.43) family.

The protein resides in the cell inner membrane. It carries out the reaction fluoride(in) = fluoride(out). Na(+) is not transported, but it plays an essential structural role and its presence is essential for fluoride channel function. Its function is as follows. Fluoride-specific ion channel. Important for reducing fluoride concentration in the cell, thus reducing its toxicity. The polypeptide is Fluoride-specific ion channel FluC (Thermus thermophilus (strain ATCC 27634 / DSM 579 / HB8)).